We begin with the raw amino-acid sequence, 200 residues long: NAD(P)H dehydrogenase (quinone) (200 aa).

Positions 4 to 190 (VLVLYYSTYG…EGARFQGRHV (187 aa)) constitute a Flavodoxin-like domain. Residues 10–15 (STYGHV) and 78–80 (TRY) each bind FMN. Residue Tyr-12 coordinates NAD(+). Trp-98 is a substrate binding site. FMN is bound by residues 113 to 119 (STASQHG) and His-134.

It belongs to the WrbA family. Requires FMN as cofactor.

It carries out the reaction a quinone + NADH + H(+) = a quinol + NAD(+). It catalyses the reaction a quinone + NADPH + H(+) = a quinol + NADP(+). The sequence is that of NAD(P)H dehydrogenase (quinone) from Methylobacterium radiotolerans (strain ATCC 27329 / DSM 1819 / JCM 2831 / NBRC 15690 / NCIMB 10815 / 0-1).